The primary structure comprises 407 residues: MMLNSGDTAWMLISTALVILMTVPGVAMFYSGLTKRENVLNTIFLSFVSLGIVSLLWFLFGYGLIFGGDVSGIIGSHQVGISLINLGSASKYAPTIPEGLFAIFQMTFAAITVALISGAVVERIKFSSWILFIPLWFALVYVPVAHWVWGGGFLQNLGVHDFAGGIVVHITSGIAALALALVTGPRYDQKLMPHHLGYSVIGTGLLWFGWFGFNAGSALSAGSLAANAMIVTNTSAAAGMIGWILMDRLKTGKPTLLGALSGAVAGLASITPAAGFVDIGASIVTGLVAAVICYLAVSWLKPAAGYDDALDVFGIHGVSGIIGTLGVGLFAVPALNPSLTSGGLLTGSTSLLVSQLIGVVTVTVYTFVVTYILAMLLMKFKGLRVEREEEIQGLDINLHEETGYRLT.

Transmembrane regions (helical) follow at residues 9-29 (AWML…VAMF), 47-67 (FVSL…LIFG), 70-90 (VSGI…GSAS), 101-121 (FAIF…GAVV), 129-149 (WILF…HWVW), 162-182 (FAGG…LALV), 196-216 (LGYS…FNAG), 226-246 (ANAM…WILM), 257-277 (LGAL…AGFV), 279-299 (IGAS…AVSW), 312-332 (VFGI…LFAV), and 357-377 (IGVV…AMLL).

This sequence belongs to the ammonia transporter channel (TC 1.A.11.2) family.

It is found in the cell membrane. This Methanothermobacter thermautotrophicus (strain ATCC 29096 / DSM 1053 / JCM 10044 / NBRC 100330 / Delta H) (Methanobacterium thermoautotrophicum) protein is Putative ammonium transporter MTH_661.